The primary structure comprises 203 residues: Large ribosomal subunit protein bL25 (203 aa).

Belongs to the bacterial ribosomal protein bL25 family. CTC subfamily. As to quaternary structure, part of the 50S ribosomal subunit; part of the 5S rRNA/L5/L18/L25 subcomplex. Contacts the 5S rRNA. Binds to the 5S rRNA independently of L5 and L18.

This is one of the proteins that binds to the 5S RNA in the ribosome where it forms part of the central protuberance. This is Large ribosomal subunit protein bL25 from Pseudomonas savastanoi pv. phaseolicola (strain 1448A / Race 6) (Pseudomonas syringae pv. phaseolicola (strain 1448A / Race 6)).